We begin with the raw amino-acid sequence, 231 residues long: Protein APE_1056.1 (231 aa).

The AMMECR1 domain occupies 29–214; sequence VRIARRAVEE…ETEPRGPVVR (186 aa).

This chain is Protein APE_1056.1, found in Aeropyrum pernix (strain ATCC 700893 / DSM 11879 / JCM 9820 / NBRC 100138 / K1).